A 218-amino-acid polypeptide reads, in one-letter code: Protein GrpE (218 aa).

Basic and acidic residues-rich tracts occupy residues 1–13 (MSKN…HQNN) and 20–32 (VDKK…NKQE). Positions 1-32 (MSKNNENIKHQNNDKVNNQVDKKETKNHNKQE) are disordered.

This sequence belongs to the GrpE family. In terms of assembly, homodimer.

It is found in the cytoplasm. Functionally, participates actively in the response to hyperosmotic and heat shock by preventing the aggregation of stress-denatured proteins, in association with DnaK and GrpE. It is the nucleotide exchange factor for DnaK and may function as a thermosensor. Unfolded proteins bind initially to DnaJ; upon interaction with the DnaJ-bound protein, DnaK hydrolyzes its bound ATP, resulting in the formation of a stable complex. GrpE releases ADP from DnaK; ATP binding to DnaK triggers the release of the substrate protein, thus completing the reaction cycle. Several rounds of ATP-dependent interactions between DnaJ, DnaK and GrpE are required for fully efficient folding. This Ureaplasma parvum serovar 3 (strain ATCC 27815 / 27 / NCTC 11736) protein is Protein GrpE.